The primary structure comprises 751 residues: Catalase-peroxidase (751 aa).

Positions 1–21 are disordered; the sequence is MSNESKCPFHQTAGGGTTNRD. The tryptophyl-tyrosyl-methioninium (Trp-Tyr) (with M-270) cross-link spans 90–244; that stretch reads WHSAGTYRIG…LAAVQMGLIY (155 aa). Histidine 91 (proton acceptor) is an active-site residue. Positions 244–270 form a cross-link, tryptophyl-tyrosyl-methioninium (Tyr-Met) (with W-90); sequence YVNPEGPEGNPDPVASGKDIRETFGRM. Histidine 285 provides a ligand contact to heme b. The disordered stretch occupies residues 365-390; that stretch reads AHQWRPKEGKGAGTVPDAHDPGKKHA.

Belongs to the peroxidase family. Peroxidase/catalase subfamily. As to quaternary structure, homodimer or homotetramer. Heme b serves as cofactor. Post-translationally, formation of the three residue Trp-Tyr-Met cross-link is important for the catalase, but not the peroxidase activity of the enzyme.

It catalyses the reaction H2O2 + AH2 = A + 2 H2O. The enzyme catalyses 2 H2O2 = O2 + 2 H2O. In terms of biological role, bifunctional enzyme with both catalase and broad-spectrum peroxidase activity. This is Catalase-peroxidase from Pseudomonas putida (strain GB-1).